A 1211-amino-acid chain; its full sequence is A disintegrin and metalloproteinase with thrombospondin motifs 2 (1211 aa).

The signal sequence occupies residues 1-29 (MDPPAGAARRLLCPALLLLLLLLPPPLLP). Residues 30–253 (PPPPPANARL…GVLEEHANSS (224 aa)) constitute a propeptide that is removed on maturation. 2 N-linked (GlcNAc...) asparagine glycosylation sites follow: Asn112 and Asn251. A Peptidase M12B domain is found at 266-470 (YNIEVLLGVD…HSYDCLLDDP (205 aa)). 10 disulfides stabilise this stretch: Cys343/Cys392, Cys386/Cys465, Cys425/Cys451, Cys492/Cys517, Cys503/Cys526, Cys512/Cys545, Cys539/Cys550, Cys573/Cys610, Cys577/Cys615, and Cys588/Cys600. Position 408 (His408) interacts with Zn(2+). Glu409 is an active-site residue. His412 and His418 together coordinate Zn(2+). The Disintegrin domain maps to 480 to 560 (QLPGLHYSMN…IWLTPDILKR (81 aa)). Residues 561–616 (DGSWGAWSPFGSCSRTCGTGVKFRTRQCDNPHPANGGRTCSGLAYDFQLCSRQDCP) enclose the TSP type-1 1 domain. Positions 691–693 (RGD) match the Cell attachment site motif. Residues 723–851 (KVVKGTFTRS…NVDDNNVLEE (129 aa)) form a spacer region. 3 consecutive TSP type-1 domains span residues 854–912 (VVYE…NPQE), 914–971 (SQPV…RACS), and 975–1029 (CPGR…GPCP). Asn949 and Asn993 each carry an N-linked (GlcNAc...) asparagine glycan. Disulfide bonds link Cys987–Cys1023, Cys991–Cys1028, and Cys1002–Cys1012. Asn1031 is a glycosylation site (N-linked (GlcNAc...) asparagine). Residues 1059-1097 (SKGHCQGDKSIFCRMEVLSRYCSIPGYNKLCCKSCNLYN) enclose the PLAC domain. 3 N-linked (GlcNAc...) asparagine glycosylation sites follow: Asn1098, Asn1145, and Asn1150. Positions 1170–1191 (LEDEVQPPNLIPRRPSPYEKTR) are disordered.

In terms of assembly, may belong to a multimeric complex. Binds specifically to collagen type XIV. Requires Zn(2+) as cofactor. In terms of processing, the precursor is cleaved by a furin endopeptidase. Glycosylated. Can be O-fucosylated by POFUT2 on a serine or a threonine residue found within the consensus sequence C1-X(2)-(S/T)-C2-G of the TSP type-1 repeat domains where C1 and C2 are the first and second cysteine residue of the repeat, respectively. Fucosylated repeats can then be further glycosylated by the addition of a beta-1,3-glucose residue by the glucosyltransferase, B3GALTL. Fucosylation mediates the efficient secretion of ADAMTS family members. Can also be C-glycosylated with one or two mannose molecules on tryptophan residues within the consensus sequence W-X-X-W of the TPRs, and N-glycosylated. These other glycosylations can also facilitate secretion. As to expression, expressed at high level in skin, bone, tendon and aorta and at low levels in thymus and brain.

The protein localises to the secreted. The protein resides in the extracellular space. It localises to the extracellular matrix. It carries out the reaction Cleaves the N-propeptide of collagen chain alpha1(I) at Pro-|-Gln and of alpha1(II) and alpha2(I) at Ala-|-Gln.. Cleaves the propeptides of type I and II collagen prior to fibril assembly. Does not act on type III collagen. Cleaves lysyl oxidase LOX at a site downstream of its propeptide cleavage site to produce a short LOX form with reduced collagen-binding activity. The sequence is that of A disintegrin and metalloproteinase with thrombospondin motifs 2 (ADAMTS2) from Homo sapiens (Human).